A 278-amino-acid chain; its full sequence is Heat stress transcription factor C-2b (278 aa).

The segment covering 105 to 114 (AAGGGGGGGG) has biased composition (gly residues). The segment at 105 to 132 (AAGGGGGGGGGKRRDASADGGGGGGDED) is disordered. The segment at 143-179 (LKQEQRTIDDRVAAMWRRVQETERRPKQMLAFLLKVV) is hydrophobic repeat HR-A/B. The Nuclear localization signal motif lies at 219–222 (KRAR).

It belongs to the HSF family. Class C subfamily. As to quaternary structure, homotrimer. Post-translationally, exhibits temperature-dependent phosphorylation.

It localises to the nucleus. Transcriptional regulator that specifically binds DNA of heat shock promoter elements (HSE). This chain is Heat stress transcription factor C-2b (HSFC2B), found in Oryza sativa subsp. japonica (Rice).